Here is a 336-residue protein sequence, read N- to C-terminus: HTH-type transcriptional repressor PurR (336 aa).

One can recognise an HTH lacI-type domain in the interval 2–56 (ATIKDVAKLAGVSTTTVSHVINKTRFVAEDTSKAVWDAIQQLNYSPSAVARSLKV). A DNA-binding region (H-T-H motif) is located at residues 4-23 (IKDVAKLAGVSTTTVSHVIN). Residues 48–56 (SAVARSLKV) mediate DNA binding. The hypoxanthine site is built by Tyr73, Lys188, Phe219, and Asp273.

In terms of assembly, homodimer.

Its pathway is purine metabolism; purine nucleotide biosynthesis [regulation]. In terms of biological role, is the main repressor of the genes involved in the de novo synthesis of purine nucleotides, regulating purB, purC, purEK, purF, purHD, purL, purMN and guaBA expression. PurR is allosterically activated to bind its cognate DNA by binding the purine corepressors, hypoxanthine or guanine, thereby effecting transcription repression. The protein is HTH-type transcriptional repressor PurR of Actinobacillus pleuropneumoniae serotype 5b (strain L20).